Reading from the N-terminus, the 231-residue chain is Small ribosomal subunit protein uS3 (231 aa).

Residues 17–86 enclose the KH type-2 domain; the sequence is VEQYLNKELK…SPQVEVQQVA (70 aa).

Belongs to the universal ribosomal protein uS3 family. As to quaternary structure, part of the 30S ribosomal subunit.

Functionally, binds the lower part of the 30S subunit head. This Methanocorpusculum labreanum (strain ATCC 43576 / DSM 4855 / Z) protein is Small ribosomal subunit protein uS3.